Reading from the N-terminus, the 259-residue chain is ATP synthase subunit b 3 (259 aa).

A helical transmembrane segment spans residues Trp5–Phe27.

The protein belongs to the ATPase B chain family. In terms of assembly, F-type ATPases have 2 components, F(1) - the catalytic core - and F(0) - the membrane proton channel. F(1) has five subunits: alpha(3), beta(3), gamma(1), delta(1), epsilon(1). F(0) has three main subunits: a(1), b(2) and c(10-14). The alpha and beta chains form an alternating ring which encloses part of the gamma chain. F(1) is attached to F(0) by a central stalk formed by the gamma and epsilon chains, while a peripheral stalk is formed by the delta and b chains.

The protein localises to the cell inner membrane. F(1)F(0) ATP synthase produces ATP from ADP in the presence of a proton or sodium gradient. F-type ATPases consist of two structural domains, F(1) containing the extramembraneous catalytic core and F(0) containing the membrane proton channel, linked together by a central stalk and a peripheral stalk. During catalysis, ATP synthesis in the catalytic domain of F(1) is coupled via a rotary mechanism of the central stalk subunits to proton translocation. In terms of biological role, component of the F(0) channel, it forms part of the peripheral stalk, linking F(1) to F(0). In Beijerinckia indica subsp. indica (strain ATCC 9039 / DSM 1715 / NCIMB 8712), this protein is ATP synthase subunit b 3.